Reading from the N-terminus, the 200-residue chain is Dephospho-CoA kinase (200 aa).

The region spanning 4–200 is the DPCK domain; it reads VIGLTGGIAS…AILKKWNIID (197 aa). 12–17 is an ATP binding site; that stretch reads ASGKST.

The protein belongs to the CoaE family.

Its subcellular location is the cytoplasm. It carries out the reaction 3'-dephospho-CoA + ATP = ADP + CoA + H(+). Its pathway is cofactor biosynthesis; coenzyme A biosynthesis; CoA from (R)-pantothenate: step 5/5. In terms of biological role, catalyzes the phosphorylation of the 3'-hydroxyl group of dephosphocoenzyme A to form coenzyme A. This is Dephospho-CoA kinase from Bacillus anthracis.